Reading from the N-terminus, the 329-residue chain is Isopentenyl-diphosphate delta-isomerase (329 aa).

4–5 is a binding site for substrate; it reads RK. Residues 59-61, S89, and N116 contribute to the FMN site; that span reads AMT. Q146 is a substrate binding site. E147 provides a ligand contact to Mg(2+). FMN contacts are provided by residues K178, S203, T208, 252–254, and 273–274; these read GVR and SR.

This sequence belongs to the IPP isomerase type 2 family. Homooctamer. Dimer of tetramers. Requires FMN as cofactor. It depends on NADPH as a cofactor. The cofactor is Mg(2+).

Its subcellular location is the cytoplasm. It catalyses the reaction isopentenyl diphosphate = dimethylallyl diphosphate. Involved in the biosynthesis of isoprenoids. Catalyzes the 1,3-allylic rearrangement of the homoallylic substrate isopentenyl (IPP) to its allylic isomer, dimethylallyl diphosphate (DMAPP). This Streptococcus pyogenes serotype M28 (strain MGAS6180) protein is Isopentenyl-diphosphate delta-isomerase.